Consider the following 119-residue polypeptide: Large ribosomal subunit protein bL20 (119 aa).

Belongs to the bacterial ribosomal protein bL20 family.

Binds directly to 23S ribosomal RNA and is necessary for the in vitro assembly process of the 50S ribosomal subunit. It is not involved in the protein synthesizing functions of that subunit. In Vesicomyosocius okutanii subsp. Calyptogena okutanii (strain HA), this protein is Large ribosomal subunit protein bL20.